The sequence spans 533 residues: Cytochrome P450 9e2 (533 aa).

Cys475 contacts heme.

This sequence belongs to the cytochrome P450 family. Heme serves as cofactor.

Its subcellular location is the endoplasmic reticulum membrane. The protein resides in the microsome membrane. The polypeptide is Cytochrome P450 9e2 (CYP9E2) (Blattella germanica (German cockroach)).